A 285-amino-acid chain; its full sequence is Inositol oxygenase (285 aa).

Arginine 29 lines the substrate pocket. Position 33 is a phosphoserine (serine 33). 85 to 87 (DES) is a binding site for substrate. Positions 98, 123, and 124 each coordinate Fe cation. Residues lysine 127 and 141 to 142 (GD) contribute to the substrate site. The Fe cation site is built by histidine 194, histidine 220, and aspartate 253. Residue 220-221 (HS) participates in substrate binding.

Belongs to the myo-inositol oxygenase family. It depends on Fe cation as a cofactor. As to expression, kidney specific.

It localises to the cytoplasm. It carries out the reaction myo-inositol + O2 = D-glucuronate + H2O + H(+). It participates in polyol metabolism; myo-inositol degradation into D-glucuronate; D-glucuronate from myo-inositol: step 1/1. The chain is Inositol oxygenase (MIOX) from Homo sapiens (Human).